The chain runs to 308 residues: RING-H2 finger protein ATL63 (308 aa).

Residues 29 to 49 (VLLAALVFLLLVVLFVLLLHF) form a helical membrane-spanning segment. The segment at 138–180 (CVICLGLWEAGDFGRKLRNCGHGFHVECIDMWLSSHSTCPLCR) adopts an RING-type; atypical zinc-finger fold. Positions 252–308 (VFDDDEEINDGGTRSDRRRSMSMTSSASSSLMRMLSSSSSRSERNKVFPTARQDSSK) are disordered. Residues 272–291 (MSMTSSASSSLMRMLSSSSS) are compositionally biased toward low complexity.

It belongs to the RING-type zinc finger family. ATL subfamily.

Its subcellular location is the membrane. The enzyme catalyses S-ubiquitinyl-[E2 ubiquitin-conjugating enzyme]-L-cysteine + [acceptor protein]-L-lysine = [E2 ubiquitin-conjugating enzyme]-L-cysteine + N(6)-ubiquitinyl-[acceptor protein]-L-lysine.. Its pathway is protein modification; protein ubiquitination. The protein is RING-H2 finger protein ATL63 (ATL63) of Arabidopsis thaliana (Mouse-ear cress).